The following is a 741-amino-acid chain: NAD(P)H-quinone oxidoreductase subunit 5, chloroplastic (741 aa).

16 helical membrane-spanning segments follow: residues 9 to 29 (WIIP…LLLF), 40 to 60 (WAFQ…NLSI), 89 to 109 (IDPL…MVLI), 125 to 145 (FAYM…SNLI), 147 to 167 (IYIF…FWFT), 185 to 205 (GDFG…SFEF), 219 to 239 (NEVN…GAIA), 258 to 278 (TPIS…FLVA), 284 to 304 (FIVI…TVFF), 327 to 347 (LGYM…FHLI), 354 to 374 (ALLF…VGYC), 396 to 416 (NSFL…CFWS), 425 to 445 (WLYS…TAFY), 549 to 569 (LFPI…GIPF), 605 to 625 (VFSV…YKPV), and 721 to 741 (YLFF…FLNF).

Belongs to the complex I subunit 5 family. NDH is composed of at least 16 different subunits, 5 of which are encoded in the nucleus.

It localises to the plastid. It is found in the chloroplast thylakoid membrane. The enzyme catalyses a plastoquinone + NADH + (n+1) H(+)(in) = a plastoquinol + NAD(+) + n H(+)(out). It carries out the reaction a plastoquinone + NADPH + (n+1) H(+)(in) = a plastoquinol + NADP(+) + n H(+)(out). In terms of biological role, NDH shuttles electrons from NAD(P)H:plastoquinone, via FMN and iron-sulfur (Fe-S) centers, to quinones in the photosynthetic chain and possibly in a chloroplast respiratory chain. The immediate electron acceptor for the enzyme in this species is believed to be plastoquinone. Couples the redox reaction to proton translocation, and thus conserves the redox energy in a proton gradient. The polypeptide is NAD(P)H-quinone oxidoreductase subunit 5, chloroplastic (ndhF) (Flaveria ramosissima (Yellowtops)).